A 272-amino-acid polypeptide reads, in one-letter code: 3-methyl-2-oxobutanoate hydroxymethyltransferase (272 aa).

Mg(2+) is bound by residues D43 and D82. 3-methyl-2-oxobutanoate contacts are provided by residues 43 to 44 (DS), D82, and K112. E114 is a binding site for Mg(2+). Residue E179 is the Proton acceptor of the active site.

Belongs to the PanB family. As to quaternary structure, homodecamer; pentamer of dimers. Mg(2+) is required as a cofactor.

The protein resides in the cytoplasm. The catalysed reaction is 3-methyl-2-oxobutanoate + (6R)-5,10-methylene-5,6,7,8-tetrahydrofolate + H2O = 2-dehydropantoate + (6S)-5,6,7,8-tetrahydrofolate. It functions in the pathway cofactor biosynthesis; (R)-pantothenate biosynthesis; (R)-pantoate from 3-methyl-2-oxobutanoate: step 1/2. Functionally, catalyzes the reversible reaction in which hydroxymethyl group from 5,10-methylenetetrahydrofolate is transferred onto alpha-ketoisovalerate to form ketopantoate. The sequence is that of 3-methyl-2-oxobutanoate hydroxymethyltransferase from Staphylococcus aureus (strain Newman).